Reading from the N-terminus, the 397-residue chain is Acetate kinase (397 aa).

Asparagine 8 provides a ligand contact to Mg(2+). Lysine 15 contributes to the ATP binding site. Arginine 92 contacts substrate. Aspartate 149 (proton donor/acceptor) is an active-site residue. ATP contacts are provided by residues 209-213 (HLGNG), 283-285 (DFR), and 331-335 (GVGEN). A Mg(2+)-binding site is contributed by glutamate 385.

Belongs to the acetokinase family. Homodimer. It depends on Mg(2+) as a cofactor. Mn(2+) serves as cofactor.

Its subcellular location is the cytoplasm. The enzyme catalyses acetate + ATP = acetyl phosphate + ADP. Its pathway is metabolic intermediate biosynthesis; acetyl-CoA biosynthesis; acetyl-CoA from acetate: step 1/2. Its function is as follows. Catalyzes the formation of acetyl phosphate from acetate and ATP. Can also catalyze the reverse reaction. The polypeptide is Acetate kinase (Corynebacterium glutamicum (strain R)).